The sequence spans 421 residues: Glutamyl-tRNA reductase (421 aa).

Residues 49–52 (TCNR), S109, 114–116 (EPQ), and Q120 contribute to the substrate site. C50 serves as the catalytic Nucleophile. NADP(+) is bound at residue 189–194 (GLGQIG).

The protein belongs to the glutamyl-tRNA reductase family. Homodimer.

It carries out the reaction (S)-4-amino-5-oxopentanoate + tRNA(Glu) + NADP(+) = L-glutamyl-tRNA(Glu) + NADPH + H(+). It functions in the pathway porphyrin-containing compound metabolism; protoporphyrin-IX biosynthesis; 5-aminolevulinate from L-glutamyl-tRNA(Glu): step 1/2. In terms of biological role, catalyzes the NADPH-dependent reduction of glutamyl-tRNA(Glu) to glutamate 1-semialdehyde (GSA). This Limosilactobacillus reuteri (strain DSM 20016) (Lactobacillus reuteri) protein is Glutamyl-tRNA reductase.